Consider the following 359-residue polypeptide: DNA replication and repair protein RecF (359 aa).

Residue 30–37 (GPNGSGKT) participates in ATP binding.

The protein belongs to the RecF family.

The protein localises to the cytoplasm. The RecF protein is involved in DNA metabolism; it is required for DNA replication and normal SOS inducibility. RecF binds preferentially to single-stranded, linear DNA. It also seems to bind ATP. In Aliivibrio fischeri (strain ATCC 700601 / ES114) (Vibrio fischeri), this protein is DNA replication and repair protein RecF.